A 288-amino-acid polypeptide reads, in one-letter code: Male determiner protein Nix (288 aa).

RRM domains are found at residues Tyr-19 to Ser-94, Ile-108 to Arg-179, and Arg-205 to Glu-282.

Its function is as follows. Male determiner protein (M-factor) that controls male somatic sexual differentiation. Acts as a dominant factor that regulates the mRNA splicing of doublesex (dsx) or fruitless (fru) transcripts and promotes expression of male splice forms of dsx and fru. This Aedes aegypti (Yellowfever mosquito) protein is Male determiner protein Nix.